We begin with the raw amino-acid sequence, 310 residues long: HPr kinase/phosphorylase (310 aa).

Active-site residues include H138 and K159. 153-160 (GDSGIGKS) lines the ATP pocket. Residue S160 participates in Mg(2+) binding. The active-site Proton acceptor; for phosphorylation activity. Proton donor; for dephosphorylation activity is the D177. Residues 201–210 (LEIRGVGIID) form an important for the catalytic mechanism of both phosphorylation and dephosphorylation region. Residue E202 participates in Mg(2+) binding. Residue R243 is part of the active site. The important for the catalytic mechanism of dephosphorylation stretch occupies residues 264-269 (PVKTGR).

It belongs to the HPrK/P family. In terms of assembly, homohexamer. Mg(2+) is required as a cofactor.

The enzyme catalyses [HPr protein]-L-serine + ATP = [HPr protein]-O-phospho-L-serine + ADP + H(+). It catalyses the reaction [HPr protein]-O-phospho-L-serine + phosphate + H(+) = [HPr protein]-L-serine + diphosphate. Catalyzes the ATP- as well as the pyrophosphate-dependent phosphorylation of a specific serine residue in HPr, a phosphocarrier protein of the phosphoenolpyruvate-dependent sugar phosphotransferase system (PTS). HprK/P also catalyzes the pyrophosphate-producing, inorganic phosphate-dependent dephosphorylation (phosphorolysis) of seryl-phosphorylated HPr (P-Ser-HPr). The two antagonistic activities of HprK/P are regulated by several intracellular metabolites, which change their concentration in response to the absence or presence of rapidly metabolisable carbon sources (glucose, fructose, etc.) in the growth medium. Therefore, by controlling the phosphorylation state of HPr, HPrK/P is a sensor enzyme that plays a major role in the regulation of carbon metabolism and sugar transport: it mediates carbon catabolite repression (CCR), and regulates PTS-catalyzed carbohydrate uptake and inducer exclusion. The sequence is that of HPr kinase/phosphorylase from Streptococcus uberis (strain ATCC BAA-854 / 0140J).